The sequence spans 745 residues: Cellulose synthase 1 catalytic subunit [UDP-forming] (745 aa).

3 helical membrane-spanning segments follow: residues 29–49, 106–126, and 153–173; these read YVVGALGLCALLAATMVTLSL, GILGVTLLLAELYALYMLFLS, and IFIPTYDEALSIVRLTVLGAL. The catalytic subdomain A stretch occupies residues 147–240; sequence EWPTVDIFIP…HILILDCDHI (94 aa). The active site involves Asp189. 2 residues coordinate substrate: Asp236 and Asp238. Residues 317-377 are catalytic subdomain B; sequence KAIEEIGGFA…GQRMRWARGM (61 aa). Asp333 is an active-site residue. Helical transmembrane passes span 407-427, 430-450, 468-488, 515-535, 547-567, and 649-669; these read FFFAIPRVIFLASPLAFLFFS, IIAASPLAVGVYAIPHMFHSI, VYETVMALFLVRVTIVTMLFP, NIIFAIIMALGLLRGLYALIF, ALNCIWSVISLIILMAVISVG, and AVFTWSISNIQVEAAVVRFVF. Residues 572 to 670 enclose the PilZ domain; sequence QLRQSHRIEA…EAAVVRFVFG (99 aa). Residues 708–717 show a composition bias toward basic residues; it reads IAHSRPKKKP. Residues 708 to 745 form a disordered region; sequence IAHSRPKKKPIALPVERREPTTSQGGQKQEGKISRAAS. The segment covering 736 to 745 has biased composition (basic and acidic residues); it reads QEGKISRAAS.

It belongs to the glycosyltransferase 2 family. The cofactor is Mg(2+).

The protein resides in the cell inner membrane. It carries out the reaction [(1-&gt;4)-beta-D-glucosyl](n) + UDP-alpha-D-glucose = [(1-&gt;4)-beta-D-glucosyl](n+1) + UDP + H(+). It functions in the pathway glycan metabolism; bacterial cellulose biosynthesis. With respect to regulation, activated by bis-(3'-5') cyclic diguanylic acid (c-di-GMP). Its function is as follows. Catalytic subunit of cellulose synthase. It polymerizes uridine 5'-diphosphate glucose to cellulose. The thick cellulosic mats generated by this enzyme probably provide a specialized protective environment to the bacterium. This Komagataeibacter xylinus (Gluconacetobacter xylinus) protein is Cellulose synthase 1 catalytic subunit [UDP-forming] (bcsAI).